The primary structure comprises 216 residues: Phosphatidylserine decarboxylase proenzyme (216 aa).

The active-site Schiff-base intermediate with substrate; via pyruvic acid is the serine 183. A Pyruvic acid (Ser); by autocatalysis modification is found at serine 183.

The protein belongs to the phosphatidylserine decarboxylase family. PSD-A subfamily. As to quaternary structure, heterodimer of a large membrane-associated beta subunit and a small pyruvoyl-containing alpha subunit. Pyruvate is required as a cofactor. In terms of processing, is synthesized initially as an inactive proenzyme. Formation of the active enzyme involves a self-maturation process in which the active site pyruvoyl group is generated from an internal serine residue via an autocatalytic post-translational modification. Two non-identical subunits are generated from the proenzyme in this reaction, and the pyruvate is formed at the N-terminus of the alpha chain, which is derived from the carboxyl end of the proenzyme. The post-translation cleavage follows an unusual pathway, termed non-hydrolytic serinolysis, in which the side chain hydroxyl group of the serine supplies its oxygen atom to form the C-terminus of the beta chain, while the remainder of the serine residue undergoes an oxidative deamination to produce ammonia and the pyruvoyl prosthetic group on the alpha chain.

It localises to the cell membrane. The enzyme catalyses a 1,2-diacyl-sn-glycero-3-phospho-L-serine + H(+) = a 1,2-diacyl-sn-glycero-3-phosphoethanolamine + CO2. It functions in the pathway phospholipid metabolism; phosphatidylethanolamine biosynthesis; phosphatidylethanolamine from CDP-diacylglycerol: step 2/2. Its function is as follows. Catalyzes the formation of phosphatidylethanolamine (PtdEtn) from phosphatidylserine (PtdSer). The protein is Phosphatidylserine decarboxylase proenzyme of Cupriavidus taiwanensis (strain DSM 17343 / BCRC 17206 / CCUG 44338 / CIP 107171 / LMG 19424 / R1) (Ralstonia taiwanensis (strain LMG 19424)).